We begin with the raw amino-acid sequence, 344 residues long: Pre-mRNA-splicing factor cwc-21 (344 aa).

Residues 1–19 (MSDNVGLSTPRGSGTSGYV) show a composition bias toward polar residues. 2 disordered regions span residues 1 to 58 (MSDN…LEHD) and 98 to 344 (EMER…DNRD). Residues 38-58 (KDFDSLKHQPRQPDKGLLEHD) are compositionally biased toward basic and acidic residues. In terms of domain architecture, CWF21 spans 55–98 (LEHDRKREVEVKVFELRDKLEEEGVEEDEIETRCDELRRKLLAE). The stretch at 69–105 (ELRDKLEEEGVEEDEIETRCDELRRKLLAEMERNQNS) forms a coiled coil. 3 stretches are compositionally biased toward basic and acidic residues: residues 120 to 167 (QVHE…REAN), 188 to 226 (RGGD…DRPP), and 238 to 277 (GGRD…DTGR). Residues 288–306 (SRSRSRSRSYSRSRSPPRR) are compositionally biased toward basic residues. 2 stretches are compositionally biased toward basic and acidic residues: residues 307 to 316 (RAADSQDRSL) and 327 to 344 (SPDR…DNRD).

This sequence belongs to the CWC21 family. As to quaternary structure, associates with the NTC complex (or PRP19-associated complex). The NTC complex associates with the spliceosome after the release of the U1 and U4 snRNAs and forms the CWC spliceosome subcomplex reminiscent of a late-stage spliceosome.

It is found in the cytoplasm. The protein localises to the nucleus. Involved in pre-mRNA splicing. May function at or prior to the first catalytic step of splicing at the catalytic center of the spliceosome. May do so by stabilizing the catalytic center or the position of the RNA substrate. In Neurospora crassa (strain ATCC 24698 / 74-OR23-1A / CBS 708.71 / DSM 1257 / FGSC 987), this protein is Pre-mRNA-splicing factor cwc-21 (cwc-21).